The following is a 269-amino-acid chain: Indole-3-glycerol phosphate synthase (269 aa).

It belongs to the TrpC family.

The catalysed reaction is 1-(2-carboxyphenylamino)-1-deoxy-D-ribulose 5-phosphate + H(+) = (1S,2R)-1-C-(indol-3-yl)glycerol 3-phosphate + CO2 + H2O. It functions in the pathway amino-acid biosynthesis; L-tryptophan biosynthesis; L-tryptophan from chorismate: step 4/5. The chain is Indole-3-glycerol phosphate synthase from Rhodococcus opacus (strain B4).